Here is a 218-residue protein sequence, read N- to C-terminus: Superoxide dismutase [Mn], mitochondrial (218 aa).

The transit peptide at 1–21 (MLRFLSKNSVAAIRNVSIARG) directs the protein to the mitochondrion. Mn(2+) contacts are provided by histidine 50 and histidine 96. Serine 129 is modified (phosphoserine). 2 residues coordinate Mn(2+): aspartate 181 and histidine 185.

Belongs to the iron/manganese superoxide dismutase family. Homodimer. Mn(2+) is required as a cofactor.

The protein localises to the mitochondrion matrix. The catalysed reaction is 2 superoxide + 2 H(+) = H2O2 + O2. In terms of biological role, destroys superoxide anion radicals which are normally produced within the cells and which are toxic to biological systems. This chain is Superoxide dismutase [Mn], mitochondrial (sod2), found in Schizosaccharomyces pombe (strain 972 / ATCC 24843) (Fission yeast).